The chain runs to 829 residues: Probable beta-glucosidase H (829 aa).

N13 is a glycosylation site (N-linked (GlcNAc...) asparagine). D225 is a catalytic residue. N304, N473, N602, N627, N664, and N749 each carry an N-linked (GlcNAc...) asparagine glycan. Positions R389–V548 constitute a PA14 domain.

It belongs to the glycosyl hydrolase 3 family.

Its subcellular location is the secreted. The enzyme catalyses Hydrolysis of terminal, non-reducing beta-D-glucosyl residues with release of beta-D-glucose.. The protein operates within glycan metabolism; cellulose degradation. In terms of biological role, beta-glucosidases are one of a number of cellulolytic enzymes involved in the degradation of cellulosic biomass. Catalyzes the last step releasing glucose from the inhibitory cellobiose. This is Probable beta-glucosidase H (bglH) from Aspergillus fumigatus (strain CBS 144.89 / FGSC A1163 / CEA10) (Neosartorya fumigata).